The primary structure comprises 780 residues: Alpha-xylosidase (780 aa).

N-linked (GlcNAc...) asparagine glycans are attached at residues N48, N84, N247, and N298. Residues D434 and E437 contribute to the active site. N443 is a glycosylation site (N-linked (GlcNAc...) asparagine). D501 functions as the Proton donor in the catalytic mechanism. N-linked (GlcNAc...) asparagine glycosylation is present at N718.

Belongs to the glycosyl hydrolase 31 family.

It is found in the secreted. It catalyses the reaction Hydrolysis of terminal, non-reducing alpha-D-xylose residues with release of alpha-D-xylose.. Catalyzes the liberation of alpha-xylose from the non-reducing terminal glucose of xyloglucan oligosaccharides. In Emericella nidulans (strain FGSC A4 / ATCC 38163 / CBS 112.46 / NRRL 194 / M139) (Aspergillus nidulans), this protein is Alpha-xylosidase.